Consider the following 1224-residue polypeptide: Dynactin subunit 1 (1224 aa).

A compositionally biased stretch (basic residues) spans 1–10 (MAQSRRHPHG). The interval 1–30 (MAQSRRHPHGRASSAGPRMSTEASSKPLKV) is disordered. A CAP-Gly domain is found at 49–91 (GATLXATGKWVGVILDEAKGKNDGTVQGRKYFTCEENHGIFVR). Disordered stretches follow at residues 100–217 (DGAD…RSQV), 374–402 (SASEKQEHVKLQKQMEKKNTELESLRQQR), and 888–918 (PHCHHEQDATAMQEGEYDADRPQSKPTPPAE). Residues 117–146 (VPKRHSRXAAKGSKLRGAKPKKTTARRPKP) are compositionally biased toward basic residues. Residues 148 to 180 (RTPTSAPSSGTAGPSGSASASGGEMSSSEPSTP) show a composition bias toward low complexity. Residues 205 to 540 (SPTKEEENLR…QEASAEKQQQ (336 aa)) are a coiled coil. A compositionally biased stretch (basic and acidic residues) spans 207 to 217 (TKEEENLRSQV). Coiled-coil stretches lie at residues 936-1042 (LKLE…EGLR) and 1081-1117 (KDSPLLLQQIEALQLSIRHLKNENNRLKGAQMKLELA). The interval 1203–1224 (WCSSSRARASPPASACSPPRPS) is disordered. Residues 1204-1224 (CSSSRARASPPASACSPPRPS) show a composition bias toward low complexity.

Belongs to the dynactin 150 kDa subunit family. In terms of assembly, monomer and homodimer. Subunit of dynactin, a multiprotein complex part of a tripartite complex with dynein and a adapter, such as BICDL1, BICD2 or HOOK3. The dynactin complex is built around ACTR1A/ACTB filament and consists of an actin-related filament composed of a shoulder domain, a pointed end and a barbed end. Its length is defined by its flexible shoulder domain. The soulder is composed of 2 DCTN1 subunits, 4 DCTN2 and 2 DCTN3. DCTN1/p150(glued) binds directly to microtubules and to cytoplasmic dynein. Ubiquitously expressed.

Its subcellular location is the cytoplasm. The protein resides in the cytoskeleton. The protein localises to the microtubule organizing center. It localises to the centrosome. It is found in the centriole. Its subcellular location is the spindle. The protein resides in the cell cortex. Functionally, part of the dynactin complex that activates the molecular motor dynein for ultra-processive transport along microtubules. Plays a key role in dynein-mediated retrograde transport of vesicles and organelles along microtubules by recruiting and tethering dynein to microtubules. Binds to both dynein and microtubules providing a link between specific cargos, microtubules and dynein. Essential for targeting dynein to microtubule plus ends, recruiting dynein to membranous cargos and enhancing dynein processivity (the ability to move along a microtubule for a long distance without falling off the track). Can also act as a brake to slow the dynein motor during motility along the microtubule. Can regulate microtubule stability by promoting microtubule formation, nucleation and polymerization and by inhibiting microtubule catastrophe in neurons. Inhibits microtubule catastrophe by binding both to microtubules and to tubulin, leading to enhanced microtubule stability along the axon. Plays a role in metaphase spindle orientation. Plays a role in centriole cohesion and subdistal appendage organization and function. Its recruitment to the centriole in a KIF3A-dependent manner is essential for the maintenance of centriole cohesion and the formation of subdistal appendage. Also required for microtubule anchoring at the mother centriole. Plays a role in primary cilia formation. The polypeptide is Dynactin subunit 1 (DCTN1) (Gallus gallus (Chicken)).